A 249-amino-acid polypeptide reads, in one-letter code: NH(3)-dependent NAD(+) synthetase (249 aa).

29–36 contacts ATP; sequence GVSGGVDS. D35 is a Mg(2+) binding site. R116 is a deamido-NAD(+) binding site. Residue T136 participates in ATP binding. E141 serves as a coordination point for Mg(2+). The deamido-NAD(+) site is built by K149 and D156. The ATP site is built by K165 and S187. 233–234 serves as a coordination point for deamido-NAD(+); that stretch reads HK.

Belongs to the NAD synthetase family. In terms of assembly, homodimer.

It carries out the reaction deamido-NAD(+) + NH4(+) + ATP = AMP + diphosphate + NAD(+) + H(+). Its pathway is cofactor biosynthesis; NAD(+) biosynthesis; NAD(+) from deamido-NAD(+) (ammonia route): step 1/1. Functionally, catalyzes the ATP-dependent amidation of deamido-NAD to form NAD. Uses ammonia as a nitrogen source. This chain is NH(3)-dependent NAD(+) synthetase, found in Syntrophomonas wolfei subsp. wolfei (strain DSM 2245B / Goettingen).